A 258-amino-acid polypeptide reads, in one-letter code: MALSRTHRVVAGVAHTRVYKKIWKYWYPLMTRGLGADELVFINWAYEEDPPMDLPLEATDEPDRCHINLYHRTATQADLSGKRVLEVSCGHGGGASYLTRTLGPASYTALDLNPAGIKFCQQRHHLPGLDFVQGDAEDLPFEDESFDVVLNVEASHCYPRFPVFLEEVKRVLRPGGYFAYADIRPCTEIAEWEAALAAAGLQQISHREINAEVLRGIDINTPKSRERVKRHLPIFLRAAGRNYIGATGTPPIPPDAKR.

This sequence belongs to the methyltransferase superfamily. Phthiotriol/phenolphthiotriol dimycocerosates methyltransferase family.

Functionally, catalyzes the methylation of the lipid moiety of the intermediate compounds phthiotriol and glycosylated phenolphthiotriol dimycoserosates to form phthiocerol dimycocerosates (DIM A) and glycosylated phenolphthiocerol dimycocerosates (PGL). In Mycobacterium ulcerans (strain Agy99), this protein is Probable phthiotriol/phenolphthiotriol dimycocerosates methyltransferase 2.